The primary structure comprises 416 residues: CinA-like protein (416 aa).

The protein belongs to the CinA family.

The chain is CinA-like protein from Synechocystis sp. (strain ATCC 27184 / PCC 6803 / Kazusa).